The primary structure comprises 225 residues: Thymidylate kinase (225 aa).

Residue 10–17 (GGEGAGKT) coordinates ATP.

This sequence belongs to the thymidylate kinase family.

It carries out the reaction dTMP + ATP = dTDP + ADP. Its function is as follows. Phosphorylation of dTMP to form dTDP in both de novo and salvage pathways of dTTP synthesis. This chain is Thymidylate kinase, found in Oceanobacillus iheyensis (strain DSM 14371 / CIP 107618 / JCM 11309 / KCTC 3954 / HTE831).